Reading from the N-terminus, the 140-residue chain is 3-hydroxyacyl-[acyl-carrier-protein] dehydratase FabZ (140 aa).

His-47 is a catalytic residue.

This sequence belongs to the thioester dehydratase family. FabZ subfamily.

It is found in the cytoplasm. It catalyses the reaction a (3R)-hydroxyacyl-[ACP] = a (2E)-enoyl-[ACP] + H2O. Its function is as follows. Involved in unsaturated fatty acids biosynthesis. Catalyzes the dehydration of short chain beta-hydroxyacyl-ACPs and long chain saturated and unsaturated beta-hydroxyacyl-ACPs. The polypeptide is 3-hydroxyacyl-[acyl-carrier-protein] dehydratase FabZ (Streptococcus pyogenes serotype M49 (strain NZ131)).